A 273-amino-acid polypeptide reads, in one-letter code: MNNRVHQGHLARKRFGQNFLNDRFVIDSIVSAINPQKGQAMVEIGPGLAALTEPVGERLDKLTVIELDRDLAARLQTHPFLGPKLTIYQQDAMTMNFGELSTQLGQPLRVFGNLPYNISTPLMFHLFSYTDAIADMHFMLQKEVVNRLVAGPNSKAYGRLSVMAQYYCQVIPVLEVPPSAFTPPPKVDSAVVRLVPHATMPYPVKDIRVLSRITTEAFNQRRKTIRNSLGNLFSVETLTEMGIDPAMRAENISVAQYCQMANYLSENAPLKES.

6 residues coordinate S-adenosyl-L-methionine: Asn18, Leu20, Gly45, Glu66, Asp91, and Asn113.

It belongs to the class I-like SAM-binding methyltransferase superfamily. rRNA adenine N(6)-methyltransferase family. RsmA subfamily.

Its subcellular location is the cytoplasm. It catalyses the reaction adenosine(1518)/adenosine(1519) in 16S rRNA + 4 S-adenosyl-L-methionine = N(6)-dimethyladenosine(1518)/N(6)-dimethyladenosine(1519) in 16S rRNA + 4 S-adenosyl-L-homocysteine + 4 H(+). Functionally, specifically dimethylates two adjacent adenosines (A1518 and A1519) in the loop of a conserved hairpin near the 3'-end of 16S rRNA in the 30S particle. May play a critical role in biogenesis of 30S subunits. The polypeptide is Ribosomal RNA small subunit methyltransferase A (Salmonella schwarzengrund (strain CVM19633)).